A 426-amino-acid polypeptide reads, in one-letter code: 3-phosphoshikimate 1-carboxyvinyltransferase (426 aa).

Lysine 22, serine 23, and arginine 27 together coordinate 3-phosphoshikimate. Lysine 22 serves as a coordination point for phosphoenolpyruvate. Positions 96 and 124 each coordinate phosphoenolpyruvate. The 3-phosphoshikimate site is built by serine 170, serine 171, glutamine 172, serine 198, aspartate 314, asparagine 337, and lysine 341. Residue glutamine 172 coordinates phosphoenolpyruvate. Aspartate 314 (proton acceptor) is an active-site residue. The phosphoenolpyruvate site is built by arginine 345, arginine 387, and lysine 412.

It belongs to the EPSP synthase family. As to quaternary structure, monomer.

It is found in the cytoplasm. The enzyme catalyses 3-phosphoshikimate + phosphoenolpyruvate = 5-O-(1-carboxyvinyl)-3-phosphoshikimate + phosphate. It functions in the pathway metabolic intermediate biosynthesis; chorismate biosynthesis; chorismate from D-erythrose 4-phosphate and phosphoenolpyruvate: step 6/7. Catalyzes the transfer of the enolpyruvyl moiety of phosphoenolpyruvate (PEP) to the 5-hydroxyl of shikimate-3-phosphate (S3P) to produce enolpyruvyl shikimate-3-phosphate and inorganic phosphate. In Shewanella sp. (strain W3-18-1), this protein is 3-phosphoshikimate 1-carboxyvinyltransferase.